The sequence spans 252 residues: Probable transcriptional regulatory protein Ava_1228 (252 aa).

This sequence belongs to the TACO1 family.

It localises to the cytoplasm. The sequence is that of Probable transcriptional regulatory protein Ava_1228 from Trichormus variabilis (strain ATCC 29413 / PCC 7937) (Anabaena variabilis).